Here is a 412-residue protein sequence, read N- to C-terminus: Multifunctional CCA protein (412 aa).

ATP contacts are provided by Gly-8 and Arg-11. Residues Gly-8 and Arg-11 each coordinate CTP. Residues Asp-21 and Asp-23 each contribute to the Mg(2+) site. ATP contacts are provided by Arg-91, Arg-137, and Arg-140. CTP is bound by residues Arg-91, Arg-137, and Arg-140. The HD domain maps to 228 to 329 (TGIHTLMTLS…VKLFDSIDAW (102 aa)).

The protein belongs to the tRNA nucleotidyltransferase/poly(A) polymerase family. Bacterial CCA-adding enzyme type 1 subfamily. As to quaternary structure, monomer. Can also form homodimers and oligomers. The cofactor is Mg(2+). Requires Ni(2+) as cofactor.

The catalysed reaction is a tRNA precursor + 2 CTP + ATP = a tRNA with a 3' CCA end + 3 diphosphate. It carries out the reaction a tRNA with a 3' CCA end + 2 CTP + ATP = a tRNA with a 3' CCACCA end + 3 diphosphate. In terms of biological role, catalyzes the addition and repair of the essential 3'-terminal CCA sequence in tRNAs without using a nucleic acid template. Adds these three nucleotides in the order of C, C, and A to the tRNA nucleotide-73, using CTP and ATP as substrates and producing inorganic pyrophosphate. tRNA 3'-terminal CCA addition is required both for tRNA processing and repair. Also involved in tRNA surveillance by mediating tandem CCA addition to generate a CCACCA at the 3' terminus of unstable tRNAs. While stable tRNAs receive only 3'-terminal CCA, unstable tRNAs are marked with CCACCA and rapidly degraded. This Escherichia coli O6:K15:H31 (strain 536 / UPEC) protein is Multifunctional CCA protein.